The sequence spans 192 residues: Adenylate kinase (192 aa).

12-17 (GSGKTT) serves as a coordination point for ATP. The NMP stretch occupies residues 33 to 62 (STGDLLRAEVAKDSELGKKIDKIISGGNLV). AMP contacts are provided by residues threonine 34, arginine 39, 60–62 (NLV), 87–90 (GYPR), and glutamine 94. The LID stretch occupies residues 129–135 (GRARGAD). Arginine 130 is an ATP binding site. AMP-binding residues include arginine 132 and arginine 144. Arginine 172 lines the ATP pocket.

This sequence belongs to the adenylate kinase family. As to quaternary structure, monomer.

It is found in the cytoplasm. The catalysed reaction is AMP + ATP = 2 ADP. It participates in purine metabolism; AMP biosynthesis via salvage pathway; AMP from ADP: step 1/1. Its function is as follows. Catalyzes the reversible transfer of the terminal phosphate group between ATP and AMP. Plays an important role in cellular energy homeostasis and in adenine nucleotide metabolism. This is Adenylate kinase from Campylobacter hominis (strain ATCC BAA-381 / DSM 21671 / CCUG 45161 / LMG 19568 / NCTC 13146 / CH001A).